Reading from the N-terminus, the 461-residue chain is Juvenile hormone epoxide hydrolase (461 aa).

Residues Leu4–Leu24 form a helical membrane-spanning segment. Asp227 serves as the catalytic Nucleophile. Tyr373 serves as the catalytic Proton donor. His430 acts as the Proton acceptor in catalysis.

This sequence belongs to the peptidase S33 family. As to quaternary structure, homodimer. Expressed in fat body, foregut and midgut but not in brain, subesophageal ganglia or silk gland of larvae on day 1 of fifth instar.

The protein resides in the microsome membrane. It localises to the endoplasmic reticulum membrane. The catalysed reaction is cis-stilbene oxide + H2O = (1R,2R)-hydrobenzoin. It carries out the reaction 1-(4-methoxyphenyl)-N-methyl-N-[(3-methyloxetan-3-yl)methyl]methanamine + H2O = 2-{[(4-methoxybenzyl)(methyl)amino]methyl}-2-methylpropane-1,3-diol. Catalyzes juvenile hormone hydrolysis. Degrades juvenile hormone III (JH III) about 3 times and 5 times slower than juvenile hormone I (JH I) and II (JH II), respectively. Degrades cis-stilbene oxide and trans-stilbene oxide about 18 and 43 times slower than JH III, respectively. The polypeptide is Juvenile hormone epoxide hydrolase (Bombyx mori (Silk moth)).